The chain runs to 376 residues: Flagellar P-ring protein 2 (376 aa).

The signal sequence occupies residues 1–19 (MTRLLLALILVVSAASAQA).

Belongs to the FlgI family. As to quaternary structure, the basal body constitutes a major portion of the flagellar organelle and consists of four rings (L,P,S, and M) mounted on a central rod.

It is found in the periplasm. The protein localises to the bacterial flagellum basal body. In terms of biological role, assembles around the rod to form the L-ring and probably protects the motor/basal body from shearing forces during rotation. This Bradyrhizobium diazoefficiens (strain JCM 10833 / BCRC 13528 / IAM 13628 / NBRC 14792 / USDA 110) protein is Flagellar P-ring protein 2.